The primary structure comprises 482 residues: Cardiolipin synthase (482 aa).

Helical transmembrane passes span 4 to 24 (LAYL…VTVF) and 34 to 54 (WAWL…YLIF). 2 consecutive PLD phosphodiesterase domains span residues 217–244 (LNYR…GDEY) and 395–422 (DNGF…DFRS). Active-site residues include His-222, Lys-224, Asp-229, His-400, Lys-402, and Asp-407.

Belongs to the phospholipase D family. Cardiolipin synthase subfamily.

Its subcellular location is the cell membrane. The enzyme catalyses 2 a 1,2-diacyl-sn-glycero-3-phospho-(1'-sn-glycerol) = a cardiolipin + glycerol. Functionally, catalyzes the reversible phosphatidyl group transfer from one phosphatidylglycerol molecule to another to form cardiolipin (CL) (diphosphatidylglycerol) and glycerol. This is Cardiolipin synthase (cls) from Listeria innocua serovar 6a (strain ATCC BAA-680 / CLIP 11262).